The sequence spans 344 residues: tRNA N6-adenosine threonylcarbamoyltransferase (344 aa).

Residues His-111 and His-115 each coordinate Fe cation. Residues 134–138 (LVSGG), Asp-167, Gly-180, Asp-184, and Asn-277 each bind substrate. Position 305 (Asp-305) interacts with Fe cation.

Belongs to the KAE1 / TsaD family. It depends on Fe(2+) as a cofactor.

It is found in the cytoplasm. It carries out the reaction L-threonylcarbamoyladenylate + adenosine(37) in tRNA = N(6)-L-threonylcarbamoyladenosine(37) in tRNA + AMP + H(+). Its function is as follows. Required for the formation of a threonylcarbamoyl group on adenosine at position 37 (t(6)A37) in tRNAs that read codons beginning with adenine. Is involved in the transfer of the threonylcarbamoyl moiety of threonylcarbamoyl-AMP (TC-AMP) to the N6 group of A37, together with TsaE and TsaB. TsaD likely plays a direct catalytic role in this reaction. This is tRNA N6-adenosine threonylcarbamoyltransferase from Microcystis aeruginosa (strain NIES-843 / IAM M-2473).